The sequence spans 417 residues: NADH-quinone oxidoreductase subunit D (417 aa).

Belongs to the complex I 49 kDa subunit family. As to quaternary structure, NDH-1 is composed of 14 different subunits. Subunits NuoB, C, D, E, F, and G constitute the peripheral sector of the complex.

The protein localises to the cell inner membrane. It carries out the reaction a quinone + NADH + 5 H(+)(in) = a quinol + NAD(+) + 4 H(+)(out). Functionally, NDH-1 shuttles electrons from NADH, via FMN and iron-sulfur (Fe-S) centers, to quinones in the respiratory chain. The immediate electron acceptor for the enzyme in this species is believed to be ubiquinone. Couples the redox reaction to proton translocation (for every two electrons transferred, four hydrogen ions are translocated across the cytoplasmic membrane), and thus conserves the redox energy in a proton gradient. The sequence is that of NADH-quinone oxidoreductase subunit D from Paracidovorax citrulli (strain AAC00-1) (Acidovorax citrulli).